Reading from the N-terminus, the 295-residue chain is Glycine N-acyltransferase-like protein Keg1 (295 aa).

Position 41 is an N6-acetyllysine; alternate (K41). K41 is modified (N6-succinyllysine; alternate). Position 43 is an N6-acetyllysine (K43). N6-acetyllysine; alternate is present on K48. An N6-succinyllysine; alternate modification is found at K48. N6-acetyllysine occurs at positions 80 and 83. An N6-acetyllysine; alternate mark is found at K124, K128, and K140. N6-succinyllysine; alternate is present on residues K124, K128, and K140. N6-acetyllysine is present on K150. K255 carries the N6-acetyllysine; alternate modification. K255 bears the N6-succinyllysine; alternate mark.

It belongs to the glycine N-acyltransferase family. Binds to microtubules. As to expression, specifically expressed in kidney and liver. Up-regulated in the regenerating liver as well as in hepatocellular carcinoma.

The protein localises to the cytoplasm. Its subcellular location is the cytoskeleton. It localises to the microtubule organizing center. The protein resides in the centrosome. It catalyses the reaction an acyl-CoA + glycine = an N-acylglycine + CoA + H(+). Functionally, acyltransferase which transfers the acyl group to the N-terminus of glycine. Can conjugate a multitude of substrates to form a variety of N-acylglycines. The polypeptide is Glycine N-acyltransferase-like protein Keg1 (Keg1) (Rattus norvegicus (Rat)).